Consider the following 186-residue polypeptide: dCTP deaminase (186 aa).

107 to 112 (KSTYAR) is a binding site for dCTP. The Proton donor/acceptor role is filled by glutamate 133. DCTP-binding residues include glutamine 152, tyrosine 166, and glutamine 176.

Belongs to the dCTP deaminase family. Homotrimer.

The enzyme catalyses dCTP + H2O + H(+) = dUTP + NH4(+). The protein operates within pyrimidine metabolism; dUMP biosynthesis; dUMP from dCTP (dUTP route): step 1/2. Its function is as follows. Catalyzes the deamination of dCTP to dUTP. The polypeptide is dCTP deaminase (Campylobacter jejuni (strain RM1221)).